Reading from the N-terminus, the 792-residue chain is Protocadherin beta-18 (792 aa).

An N-terminal signal peptide occupies residues 1–26; sequence MAARGSCVSRQRQVLFLFLLGGLCLA. 6 consecutive Cadherin domains span residues 27-133, 134-242, 243-347, 348-451, 452-561, and 568-676; these read GSEL…SPIF, QDKK…APQF, PQEL…APEL, IMSS…APAF, NQTS…APFV, and ASAP…LPEV. A glycan (N-linked (GlcNAc...) asparagine) is linked at asparagine 169. Residues asparagine 418 and asparagine 452 are each glycosylated (N-linked (GlcNAc...) asparagine). Residues 693–713 traverse the membrane as a helical segment; the sequence is VIALASVSSLFLLSVLLFVGV.

It localises to the cell membrane. Functionally, potential calcium-dependent cell-adhesion protein. This is Protocadherin beta-18 (Pcdhb18) from Mus musculus (Mouse).